Reading from the N-terminus, the 157-residue chain is MGSRPTPGLQRTTSAEYRLPSTRPPASVPSTAPGGPVVGRGPTGGPQAPKAKWSALGADGVQRDQLWRELLEAERRSQQRWAQNWSFLKDYDPMGNKKEPVKLPDHVPRFSDTVPNSTNRAVGSRVDTPLGKTLIGLDFFFVEGARKKKLEEELQPI.

Disordered stretches follow at residues 1-57 and 92-124; these read MGSR…SALG and DPMGNKKEPVKLPDHVPRFSDTVPNSTNRAVGS. Residues 92–109 are compositionally biased toward basic and acidic residues; that stretch reads DPMGNKKEPVKLPDHVPR.

It is found in the cell projection. The protein localises to the cilium. This chain is Ciliary microtubule inner protein 5 (CIMIP5), found in Bos taurus (Bovine).